The chain runs to 267 residues: Small ribosomal subunit protein uS2 (267 aa).

Residues 224–244 (GRQGEDEDVTEDSFKDNKDAK) form a disordered region. A compositionally biased stretch (basic and acidic residues) spans 235-244 (DSFKDNKDAK).

Belongs to the universal ribosomal protein uS2 family.

The polypeptide is Small ribosomal subunit protein uS2 (Lactiplantibacillus plantarum (strain ATCC BAA-793 / NCIMB 8826 / WCFS1) (Lactobacillus plantarum)).